The following is a 151-amino-acid chain: Lipoprotein signal peptidase (151 aa).

The next 3 helical transmembrane spans lie at 33–53 (VIPDFFHLTYVLNPGAAFGLL), 58–78 (WIFIPAAIIVCAGIIYAQFKI), and 87–107 (LTLGLIGGGALGNLYDRLFIG). Residues Asp111 and Asp126 contribute to the active site. The chain crosses the membrane as a helical span at residues 120–140 (FVFNFADSAIVVGVGLLMILM).

It belongs to the peptidase A8 family.

It localises to the cell membrane. It catalyses the reaction Release of signal peptides from bacterial membrane prolipoproteins. Hydrolyzes -Xaa-Yaa-Zaa-|-(S,diacylglyceryl)Cys-, in which Xaa is hydrophobic (preferably Leu), and Yaa (Ala or Ser) and Zaa (Gly or Ala) have small, neutral side chains.. It participates in protein modification; lipoprotein biosynthesis (signal peptide cleavage). Its function is as follows. This protein specifically catalyzes the removal of signal peptides from prolipoproteins. The protein is Lipoprotein signal peptidase of Desulfitobacterium hafniense (strain DSM 10664 / DCB-2).